The following is a 116-amino-acid chain: Large ribosomal subunit protein uL18 (116 aa).

It belongs to the universal ribosomal protein uL18 family. Part of the 50S ribosomal subunit; part of the 5S rRNA/L5/L18/L25 subcomplex. Contacts the 5S and 23S rRNAs.

This is one of the proteins that bind and probably mediate the attachment of the 5S RNA into the large ribosomal subunit, where it forms part of the central protuberance. The sequence is that of Large ribosomal subunit protein uL18 from Psychromonas ingrahamii (strain DSM 17664 / CCUG 51855 / 37).